A 162-amino-acid chain; its full sequence is Putative 4-hydroxy-4-methyl-2-oxoglutarate aldolase (162 aa).

Substrate is bound by residues 75-78 (GDML) and Arg97. A divalent metal cation is bound at residue Asp98.

It belongs to the class II aldolase/RraA-like family. As to quaternary structure, homotrimer. A divalent metal cation serves as cofactor.

The catalysed reaction is 4-hydroxy-4-methyl-2-oxoglutarate = 2 pyruvate. The enzyme catalyses oxaloacetate + H(+) = pyruvate + CO2. Functionally, catalyzes the aldol cleavage of 4-hydroxy-4-methyl-2-oxoglutarate (HMG) into 2 molecules of pyruvate. Also contains a secondary oxaloacetate (OAA) decarboxylase activity due to the common pyruvate enolate transition state formed following C-C bond cleavage in the retro-aldol and decarboxylation reactions. The chain is Putative 4-hydroxy-4-methyl-2-oxoglutarate aldolase from Stutzerimonas stutzeri (strain A1501) (Pseudomonas stutzeri).